The primary structure comprises 741 residues: Ethylene receptor (741 aa).

3 helical membrane-spanning segments follow: residues 23-43 (ISDF…IYFV), 53-73 (WVLV…LINL), and 92-112 (VLTA…IPDL). Cu cation is bound by residues Cys65 and His69. The region spanning 158–307 (DRHTILKTTL…VVADQVAVAL (150 aa)) is the GAF domain. The Histidine kinase domain occupies 350 to 589 (VMNHEMRTPM…TFIVKLGFPE (240 aa)). His353 carries the post-translational modification Phosphohistidine; by autocatalysis. Residues 615 to 732 (KVLVMDDNGV…KMRSVLSELL (118 aa)) enclose the Response regulatory domain. Asp663 is subject to 4-aspartylphosphate.

The protein belongs to the ethylene receptor family. As to quaternary structure, homodimer; disulfide-linked. The cofactor is Cu cation. In terms of processing, activation probably requires a transfer of a phosphate group between a His in the transmitter domain and an Asp of the receiver domain.

It is found in the endoplasmic reticulum membrane. It catalyses the reaction ATP + protein L-histidine = ADP + protein N-phospho-L-histidine.. Functionally, may act early in the ethylene signal transduction pathway, possibly as an ethylene receptor, or as a regulator of the pathway. The sequence is that of Ethylene receptor (ETR1) from Malus domestica (Apple).